The sequence spans 180 residues: Signal peptidase complex subunit 3 (180 aa).

Over 1-12 (MHNLLSRANSLL) the chain is Cytoplasmic. A helical; Signal-anchor for type II membrane protein transmembrane segment spans residues 13–33 (AFTLWVMAAVTAACFLSTVFL). Topologically, residues 34–180 (DYTVSNHLEV…PTTYTTTRRS (147 aa)) are lumenal. Asn-141 is a glycosylation site (N-linked (GlcNAc...) asparagine).

This sequence belongs to the SPCS3 family. As to quaternary structure, component of the signal peptidase complex (SPC) composed of a catalytic subunit sec-11 and three accessory subunits spcs-1, spcs-2 and spcs-3. The complex induces a local thinning of the ER membrane which is used to measure the length of the signal peptide (SP) h-region of protein substrates. This ensures the selectivity of the complex towards h-regions shorter than 18-20 amino acids.

Its subcellular location is the endoplasmic reticulum membrane. Essential component of the signal peptidase complex (SPC) which catalyzes the cleavage of N-terminal signal sequences from nascent proteins as they are translocated into the lumen of the endoplasmic reticulum. Essential for the SPC catalytic activity, possibly by stabilizing and positioning the active center of the complex close to the lumenal surface. This is Signal peptidase complex subunit 3 from Caenorhabditis briggsae.